A 177-amino-acid polypeptide reads, in one-letter code: NAD(P)H-quinone oxidoreductase subunit 6, chloroplastic (177 aa).

A run of 5 helical transmembrane segments spans residues I10–T30, I33–L53, A61–M81, L92–I112, and F152–S172.

The protein belongs to the complex I subunit 6 family. As to quaternary structure, NDH is composed of at least 16 different subunits, 5 of which are encoded in the nucleus.

It localises to the plastid. The protein resides in the chloroplast thylakoid membrane. The catalysed reaction is a plastoquinone + NADH + (n+1) H(+)(in) = a plastoquinol + NAD(+) + n H(+)(out). It carries out the reaction a plastoquinone + NADPH + (n+1) H(+)(in) = a plastoquinol + NADP(+) + n H(+)(out). Its function is as follows. NDH shuttles electrons from NAD(P)H:plastoquinone, via FMN and iron-sulfur (Fe-S) centers, to quinones in the photosynthetic chain and possibly in a chloroplast respiratory chain. The immediate electron acceptor for the enzyme in this species is believed to be plastoquinone. Couples the redox reaction to proton translocation, and thus conserves the redox energy in a proton gradient. This chain is NAD(P)H-quinone oxidoreductase subunit 6, chloroplastic (ndhG), found in Lemna minor (Common duckweed).